Consider the following 181-residue polypeptide: Acireductone dioxygenase (181 aa).

4 residues coordinate Fe(2+): His-97, His-99, Glu-103, and His-141. 4 residues coordinate Ni(2+): His-97, His-99, Glu-103, and His-141.

It belongs to the acireductone dioxygenase (ARD) family. Monomer. Fe(2+) is required as a cofactor. Ni(2+) serves as cofactor.

It catalyses the reaction 1,2-dihydroxy-5-(methylsulfanyl)pent-1-en-3-one + O2 = 3-(methylsulfanyl)propanoate + CO + formate + 2 H(+). The catalysed reaction is 1,2-dihydroxy-5-(methylsulfanyl)pent-1-en-3-one + O2 = 4-methylsulfanyl-2-oxobutanoate + formate + 2 H(+). It participates in amino-acid biosynthesis; L-methionine biosynthesis via salvage pathway; L-methionine from S-methyl-5-thio-alpha-D-ribose 1-phosphate: step 5/6. Catalyzes 2 different reactions between oxygen and the acireductone 1,2-dihydroxy-3-keto-5-methylthiopentene (DHK-MTPene) depending upon the metal bound in the active site. Fe-containing acireductone dioxygenase (Fe-ARD) produces formate and 2-keto-4-methylthiobutyrate (KMTB), the alpha-ketoacid precursor of methionine in the methionine recycle pathway. Ni-containing acireductone dioxygenase (Ni-ARD) produces methylthiopropionate, carbon monoxide and formate, and does not lie on the methionine recycle pathway. The protein is Acireductone dioxygenase of Pseudomonas syringae pv. syringae (strain B728a).